The chain runs to 220 residues: Small ribosomal subunit protein eS1 (220 aa).

Belongs to the eukaryotic ribosomal protein eS1 family.

The polypeptide is Small ribosomal subunit protein eS1 (Methanococcus vannielii (strain ATCC 35089 / DSM 1224 / JCM 13029 / OCM 148 / SB)).